The sequence spans 279 residues: Fatty acid metabolism regulator protein (279 aa).

The HTH gntR-type domain occupies 6–74 (KSPAGFAEKY…HGKPTKVNQF (69 aa)). Residues 34–53 (ERELSELIGVTRTTLREVLQ) constitute a DNA-binding region (H-T-H motif).

As to quaternary structure, homodimer.

It localises to the cytoplasm. Its function is as follows. Multifunctional regulator of fatty acid metabolism. The sequence is that of Fatty acid metabolism regulator protein from Vibrio cholerae serotype O1 (strain ATCC 39541 / Classical Ogawa 395 / O395).